Here is an 81-residue protein sequence, read N- to C-terminus: Toxin-like peptide AaF1CA5 (81 aa).

Positions 1–22 (MMKLMLFSIIVILFSLIGSIHG) are cleaved as a signal peptide. The LCN-type CS-alpha/beta domain maps to 25–81 (VPGNYPLDSSDDTYLCAPLGENPFCIKICRKHGVKYGLMLRLPCWCEYFGKIKNVKI). Cystine bridges form between cysteine 49–cysteine 68 and cysteine 53–cysteine 70.

This sequence belongs to the long (3 C-C) scorpion toxin superfamily. In terms of tissue distribution, expressed by the venom gland.

Its subcellular location is the secreted. Functionally, probable neurotoxin that inhibits ion channels. The protein is Toxin-like peptide AaF1CA5 of Androctonus australis (Sahara scorpion).